We begin with the raw amino-acid sequence, 79 residues long: U1-plectoxin-Pt1c (79 aa).

The first 18 residues, 1–18 (HLILASALICALVVCTFA), serve as a signal peptide directing secretion. A propeptide spanning residues 19–31 (EEQVNVPFLPDER) is cleaved from the precursor. Intrachain disulfides connect cysteine 35/cysteine 49, cysteine 42/cysteine 55, cysteine 48/cysteine 66, cysteine 52/cysteine 75, and cysteine 57/cysteine 64. A propeptide spanning residues 78–79 (RR) is cleaved from the precursor.

The protein belongs to the neurotoxin 02 (plectoxin) family. 02 (plectoxin) subfamily. Expressed by the venom gland.

It is found in the secreted. Functionally, potent toxin that may paralyze and/or kill insect pests such as H.virescens (lepidoptera), S.exigua (beet armyworm) and M.sexta (tobacco hornworm). The polypeptide is U1-plectoxin-Pt1c (Plectreurys tristis (Spider)).